A 160-amino-acid polypeptide reads, in one-letter code: Cytochrome b6-f complex subunit 4 (160 aa).

3 helical membrane-spanning segments follow: residues 36–56 (LLYI…GLAI), 95–115 (LLGV…PFLE), and 131–151 (TVFL…TLPI).

Belongs to the cytochrome b family. PetD subfamily. The 4 large subunits of the cytochrome b6-f complex are cytochrome b6, subunit IV (17 kDa polypeptide, petD), cytochrome f and the Rieske protein, while the 4 small subunits are petG, petL, petM and petN. The complex functions as a dimer.

The protein resides in the plastid. It localises to the chloroplast thylakoid membrane. Functionally, component of the cytochrome b6-f complex, which mediates electron transfer between photosystem II (PSII) and photosystem I (PSI), cyclic electron flow around PSI, and state transitions. In Oenothera elata subsp. hookeri (Hooker's evening primrose), this protein is Cytochrome b6-f complex subunit 4.